A 291-amino-acid polypeptide reads, in one-letter code: ATP synthase gamma chain (291 aa).

The protein belongs to the ATPase gamma chain family. F-type ATPases have 2 components, CF(1) - the catalytic core - and CF(0) - the membrane proton channel. CF(1) has five subunits: alpha(3), beta(3), gamma(1), delta(1), epsilon(1). CF(0) has three main subunits: a, b and c.

It is found in the cell inner membrane. In terms of biological role, produces ATP from ADP in the presence of a proton gradient across the membrane. The gamma chain is believed to be important in regulating ATPase activity and the flow of protons through the CF(0) complex. This Neisseria meningitidis serogroup C / serotype 2a (strain ATCC 700532 / DSM 15464 / FAM18) protein is ATP synthase gamma chain.